The chain runs to 401 residues: Phosphoglycerate kinase (401 aa).

Residues 24-26, Arg40, 63-66, Arg122, and Arg155 contribute to the substrate site; these read DFN and HFGR. ATP contacts are provided by residues Lys206, Gly297, Glu328, and 357–360; that span reads GGDS.

This sequence belongs to the phosphoglycerate kinase family. In terms of assembly, monomer.

It is found in the cytoplasm. It catalyses the reaction (2R)-3-phosphoglycerate + ATP = (2R)-3-phospho-glyceroyl phosphate + ADP. The protein operates within carbohydrate degradation; glycolysis; pyruvate from D-glyceraldehyde 3-phosphate: step 2/5. In Gloeothece citriformis (strain PCC 7424) (Cyanothece sp. (strain PCC 7424)), this protein is Phosphoglycerate kinase.